A 1164-amino-acid polypeptide reads, in one-letter code: DNA-directed RNA polymerase 132 kDa polypeptide (1164 aa).

The protein belongs to the RNA polymerase beta chain family. In terms of assembly, the DNA-dependent RNA polymerase used for intermediate and late genes expression consists of eight subunits (147) kDa, (133) kDa, (35) kDa, (30) kDa, (22) kDa, (19) kDa, (18) kDa and (7) kDa totalling more than 500 kDa in mass. The same holoenzyme, with the addition of the transcription-specificity factor RAP94, is used for early gene expression.

The protein localises to the virion. The enzyme catalyses RNA(n) + a ribonucleoside 5'-triphosphate = RNA(n+1) + diphosphate. Functionally, part of the DNA-dependent RNA polymerase which catalyzes the transcription of viral DNA into RNA using the four ribonucleoside triphosphates as substrates. Responsible for the transcription of early, intermediate and late genes. DNA-dependent RNA polymerase associates with the early transcription factor (ETF), itself composed of D6 and A7, thereby allowing the early genes transcription. Late transcription, and probably also intermediate transcription, require newly synthesized RNA polymerase. The chain is DNA-directed RNA polymerase 132 kDa polypeptide (RPO132) from Bos taurus (Bovine).